We begin with the raw amino-acid sequence, 259 residues long: Ubiquinone/menaquinone biosynthesis C-methyltransferase UbiE (259 aa).

S-adenosyl-L-methionine-binding positions include Thr-82, Asp-103, 131–132, and Ser-148; that span reads NA.

This sequence belongs to the class I-like SAM-binding methyltransferase superfamily. MenG/UbiE family.

It carries out the reaction a 2-demethylmenaquinol + S-adenosyl-L-methionine = a menaquinol + S-adenosyl-L-homocysteine + H(+). The catalysed reaction is a 2-methoxy-6-(all-trans-polyprenyl)benzene-1,4-diol + S-adenosyl-L-methionine = a 5-methoxy-2-methyl-3-(all-trans-polyprenyl)benzene-1,4-diol + S-adenosyl-L-homocysteine + H(+). It functions in the pathway quinol/quinone metabolism; menaquinone biosynthesis; menaquinol from 1,4-dihydroxy-2-naphthoate: step 2/2. Its pathway is cofactor biosynthesis; ubiquinone biosynthesis. Methyltransferase required for the conversion of demethylmenaquinol (DMKH2) to menaquinol (MKH2) and the conversion of 2-polyprenyl-6-methoxy-1,4-benzoquinol (DDMQH2) to 2-polyprenyl-3-methyl-6-methoxy-1,4-benzoquinol (DMQH2). The chain is Ubiquinone/menaquinone biosynthesis C-methyltransferase UbiE from Vibrio campbellii (strain ATCC BAA-1116).